A 157-amino-acid polypeptide reads, in one-letter code: Large ribosomal subunit protein eL24 (157 aa).

The tract at residues 95 to 157 (NQKPEVRKAQ…VSAPRVGGKR (63 aa)) is disordered. Positions 96 to 117 (QKPEVRKAQREQAIRAAKEAKK) are enriched in basic and acidic residues. Low complexity predominate over residues 123–145 (KKQTTQSSKAPAKSAQKQKIAKP).

The protein belongs to the eukaryotic ribosomal protein eL24 family. Component of the large ribosomal subunit.

The protein localises to the cytoplasm. Component of the large ribosomal subunit. The ribosome is a large ribonucleoprotein complex responsible for the synthesis of proteins in the cell. Plays an essential role in early embryonic development. The chain is Large ribosomal subunit protein eL24 (rpl24) from Danio rerio (Zebrafish).